Reading from the N-terminus, the 591-residue chain is MPSFFRALFSGLIASQLSWAAPSLLHPLEPRQQPNCNTASNRACWISGSYDITTDYEVKTPLTGVVRQYDLTLTQAENWLGPDGVVKEDVMLVNGNILGPVIHAQWGDTISVTVTNNLKYNGTTIHWHGIRQLNTNLQDGVNGITECPIPPNGGSKTYTFIAHQYGTSWYHSHFSAQYGNGIVGAIQIDGPASLPYDIDLGPLVLSDYYYKTADELVVYTQSNAPPASDNVLFNGTNINPANTTQGQYKTITLTPGKRHRLRIINTSVENNFQVSIVGHSMTVIESDFVPVDSFTTDSLFVGIGQRYDVTIDASQATDNYWMNVTFGGGGFCGKSNNPYPAAIIHYNGASNSHPTNKGVAPADHECLDLLNLVPVVPRSIPTSGFVAASDNTLDVQLSTTTRKWTINGSTLDVDWGHPITQYVINKSTAWPSTDNVWLVEEANQWAYWLIENDPTATGNALPHPIHLHGHDFVVLGRSPNVSPTAQTPYTFTSSDVSSLNGNNPIRRDVVMLPPKGWLLIAFQTTNPGAWLMHCHIAWHVSAGLGNTFLEQPSAFVAGLNTNDVNQLNSQCKSWNAYYPSKDIFKQDDSGV.

Positions 1–20 (MPSFFRALFSGLIASQLSWA) are cleaved as a signal peptide. 2 Plastocyanin-like domains span residues 66 to 189 (VRQY…IQID) and 198 to 356 (IDLG…HPTN). The N-linked (GlcNAc...) asparagine glycan is linked to N121. Cu cation contacts are provided by H126, H128, H171, and H173. 2 disulfides stabilise this stretch: C147-C571 and C332-C366. Residues N234, N242, N265, and N323 are each glycosylated (N-linked (GlcNAc...) asparagine). N-linked (GlcNAc...) asparagine glycosylation is found at N407 and N425. Residues 416–551 (GHPITQYVIN…AGLGNTFLEQ (136 aa)) enclose the Plastocyanin-like 3 domain. Cu cation-binding residues include H463, H466, H468, H533, C534, H535, and H539.

This sequence belongs to the multicopper oxidase family. Requires Cu cation as cofactor.

It localises to the secreted. The enzyme catalyses 4 hydroquinone + O2 = 4 benzosemiquinone + 2 H2O. In terms of biological role, lignin degradation and detoxification of lignin-derived products. The sequence is that of Laccase (LAC-1) from Cryphonectria parasitica (Chestnut blight fungus).